The following is a 196-amino-acid chain: uncharacterized protein (196 aa).

This sequence to H.influenzae HI_0431.

This is an uncharacterized protein from Escherichia coli (strain K12).